The primary structure comprises 243 residues: Type III pantothenate kinase (243 aa).

Residue 7–14 coordinates ATP; the sequence is DIGNTRLK. Substrate-binding positions include Tyr95 and 102–105; that span reads GIDR. Asp104 serves as the catalytic Proton acceptor. Thr126 contributes to the ATP binding site. Position 177 (Thr177) interacts with substrate.

It belongs to the type III pantothenate kinase family. In terms of assembly, homodimer. NH4(+) serves as cofactor. It depends on K(+) as a cofactor.

Its subcellular location is the cytoplasm. The catalysed reaction is (R)-pantothenate + ATP = (R)-4'-phosphopantothenate + ADP + H(+). It functions in the pathway cofactor biosynthesis; coenzyme A biosynthesis; CoA from (R)-pantothenate: step 1/5. In terms of biological role, catalyzes the phosphorylation of pantothenate (Pan), the first step in CoA biosynthesis. This Acinetobacter baylyi (strain ATCC 33305 / BD413 / ADP1) protein is Type III pantothenate kinase.